Reading from the N-terminus, the 90-residue chain is Beta-microseminoprotein (90 aa).

5 disulfide bridges follow: Cys2–Cys16, Cys34–Cys70, Cys37–Cys46, Cys39–Cys47, and Cys61–Cys84. A Valine amide modification is found at Val90.

This sequence belongs to the beta-microseminoprotein family.

Its subcellular location is the secreted. The sequence is that of Beta-microseminoprotein (MSMB) from Struthio camelus (Common ostrich).